The chain runs to 71 residues: U-scoloptoxin(21)-Sm1a (71 aa).

The N-terminal stretch at Met1–Ala21 is a signal peptide. The interval Ile45–Ser71 is disordered. The span at Ala60–Ser71 shows a compositional bias: basic and acidic residues.

Belongs to the scoloptoxin-21 family. Expressed by the venom gland.

The protein localises to the secreted. The sequence is that of U-scoloptoxin(21)-Sm1a from Scolopendra morsitans (Tanzanian blue ringleg centipede).